Consider the following 164-residue polypeptide: Crossover junction endodeoxyribonuclease RuvC (164 aa).

Active-site residues include Asp7, Glu67, and Asp140. Residues Asp7, Glu67, and Asp140 each contribute to the Mg(2+) site.

The protein belongs to the RuvC family. In terms of assembly, homodimer which binds Holliday junction (HJ) DNA. The HJ becomes 2-fold symmetrical on binding to RuvC with unstacked arms; it has a different conformation from HJ DNA in complex with RuvA. In the full resolvosome a probable DNA-RuvA(4)-RuvB(12)-RuvC(2) complex forms which resolves the HJ. Mg(2+) serves as cofactor.

Its subcellular location is the cytoplasm. It carries out the reaction Endonucleolytic cleavage at a junction such as a reciprocal single-stranded crossover between two homologous DNA duplexes (Holliday junction).. Its function is as follows. The RuvA-RuvB-RuvC complex processes Holliday junction (HJ) DNA during genetic recombination and DNA repair. Endonuclease that resolves HJ intermediates. Cleaves cruciform DNA by making single-stranded nicks across the HJ at symmetrical positions within the homologous arms, yielding a 5'-phosphate and a 3'-hydroxyl group; requires a central core of homology in the junction. The consensus cleavage sequence is 5'-(A/T)TT(C/G)-3'. Cleavage occurs on the 3'-side of the TT dinucleotide at the point of strand exchange. HJ branch migration catalyzed by RuvA-RuvB allows RuvC to scan DNA until it finds its consensus sequence, where it cleaves and resolves the cruciform DNA. In Chloroflexus aggregans (strain MD-66 / DSM 9485), this protein is Crossover junction endodeoxyribonuclease RuvC.